We begin with the raw amino-acid sequence, 484 residues long: uncharacterized protein (484 aa).

The next 12 membrane-spanning stretches (helical) occupy residues 19 to 39 (LSFGVGITLWALIVFAYMIFV), 78 to 98 (VNWGITIGRGIGSVLVGWLIV), 110 to 130 (LFFMLFGIIAPYSPTYAGFII), 134 to 154 (IFAIGGTMQIILIQPVVSNYL), 165 to 185 (FSPFFYPIGTIITLIPFAGII), 199 to 219 (IVFLVIGLLTLIPLIGYIILG), 249 to 269 (TWYWTILYGSWLVAVVFPFTF), 289 to 309 (ISVFLIFFLAGMFLGPFTIGL), 321 to 341 (ISTIITLGVFFYVLATVVFVL), 360 to 380 (LFLFLGLFMGICLWGIQGVML), 398 to 418 (FGLIWGLGYTAFTIATIITSL), and 440 to 460 (LGAYILIIIFSLVSSIGLALL).

The protein resides in the cell membrane. This is an uncharacterized protein from Mesomycoplasma hyopneumoniae (strain J / ATCC 25934 / NCTC 10110) (Mycoplasma hyopneumoniae).